A 439-amino-acid chain; its full sequence is Ribosomal protein uS12 methylthiotransferase RimO (439 aa).

Positions 1 to 117 (MNIGFISLGC…IAGVVNRIAQ (117 aa)) constitute an MTTase N-terminal domain. [4Fe-4S] cluster-binding residues include C10, C46, C80, C154, C158, and C161. In terms of domain architecture, Radical SAM core spans 140 to 370 (TTPPGSAYLK…LRLQQKITRQ (231 aa)). In terms of domain architecture, TRAM spans 373–439 (LARINTQEKV…RNYDMIGEYQ (67 aa)).

This sequence belongs to the methylthiotransferase family. RimO subfamily. [4Fe-4S] cluster serves as cofactor.

The protein resides in the cytoplasm. The enzyme catalyses L-aspartate(89)-[ribosomal protein uS12]-hydrogen + (sulfur carrier)-SH + AH2 + 2 S-adenosyl-L-methionine = 3-methylsulfanyl-L-aspartate(89)-[ribosomal protein uS12]-hydrogen + (sulfur carrier)-H + 5'-deoxyadenosine + L-methionine + A + S-adenosyl-L-homocysteine + 2 H(+). Catalyzes the methylthiolation of an aspartic acid residue of ribosomal protein uS12. The protein is Ribosomal protein uS12 methylthiotransferase RimO of Syntrophomonas wolfei subsp. wolfei (strain DSM 2245B / Goettingen).